A 309-amino-acid polypeptide reads, in one-letter code: NAD-dependent protein deacylase sirtuin-5A, mitochondrial (309 aa).

The transit peptide at methionine 1–proline 35 directs the protein to the mitochondrion. The Deacetylase sirtuin-type domain maps to serine 36–glutamate 306. Residue glycine 57 to tryptophan 76 coordinates NAD(+). Substrate contacts are provided by tyrosine 101 and arginine 104. Residue glutamine 139–aspartate 142 coordinates NAD(+). Residue histidine 157 is the Proton acceptor of the active site. Zn(2+)-binding residues include cysteine 165, cysteine 168, cysteine 206, and cysteine 211. NAD(+) contacts are provided by residues glycine 248 to serine 250, asparagine 274 to glutamate 276, and cysteine 292.

It belongs to the sirtuin family. Class III subfamily. Zn(2+) serves as cofactor.

It is found in the mitochondrion. It localises to the cytoplasm. Its subcellular location is the cytosol. The protein resides in the nucleus. The enzyme catalyses N(6)-malonyl-L-lysyl-[protein] + NAD(+) + H2O = 2''-O-malonyl-ADP-D-ribose + nicotinamide + L-lysyl-[protein]. The catalysed reaction is N(6)-succinyl-L-lysyl-[protein] + NAD(+) + H2O = 2''-O-succinyl-ADP-D-ribose + nicotinamide + L-lysyl-[protein]. It catalyses the reaction N(6)-glutaryl-L-lysyl-[protein] + NAD(+) + H2O = 2''-O-glutaryl-ADP-D-ribose + nicotinamide + L-lysyl-[protein]. Functionally, NAD-dependent lysine demalonylase, desuccinylase and deglutarylase that specifically removes malonyl, succinyl and glutaryl groups on target proteins. Has weak NAD-dependent protein deacetylase activity; however this activity may not be physiologically relevant in vivo. The polypeptide is NAD-dependent protein deacylase sirtuin-5A, mitochondrial (sirt5-a) (Xenopus laevis (African clawed frog)).